The sequence spans 257 residues: Protein orai-2 (257 aa).

4 consecutive transmembrane segments (helical) span residues 62–79, 94–114, 156–176, and 201–221; these read ASSR…VAMV, LIAF…ALLI, LGIL…FLPI, and LVST…TIHF.

This sequence belongs to the Orai family.

The protein resides in the membrane. Ca(2+) release-activated Ca(2+)-like (CRAC-like) channel subunit which mediates Ca(2+) influx and increase in Ca(2+)-selective current by synergy with the Ca(2+) sensor, stim1. This chain is Protein orai-2 (orai2), found in Xenopus laevis (African clawed frog).